Reading from the N-terminus, the 242-residue chain is Leucyl/phenylalanyl-tRNA--protein transferase (242 aa).

This sequence belongs to the L/F-transferase family.

The protein resides in the cytoplasm. The enzyme catalyses N-terminal L-lysyl-[protein] + L-leucyl-tRNA(Leu) = N-terminal L-leucyl-L-lysyl-[protein] + tRNA(Leu) + H(+). The catalysed reaction is N-terminal L-arginyl-[protein] + L-leucyl-tRNA(Leu) = N-terminal L-leucyl-L-arginyl-[protein] + tRNA(Leu) + H(+). It carries out the reaction L-phenylalanyl-tRNA(Phe) + an N-terminal L-alpha-aminoacyl-[protein] = an N-terminal L-phenylalanyl-L-alpha-aminoacyl-[protein] + tRNA(Phe). Functions in the N-end rule pathway of protein degradation where it conjugates Leu, Phe and, less efficiently, Met from aminoacyl-tRNAs to the N-termini of proteins containing an N-terminal arginine or lysine. This Edwardsiella ictaluri (strain 93-146) protein is Leucyl/phenylalanyl-tRNA--protein transferase.